Here is a 764-residue protein sequence, read N- to C-terminus: Molybdenum cofactor sulfurase 1 (764 aa).

Lys228 carries the post-translational modification N6-(pyridoxal phosphate)lysine. Residue Cys394 is part of the active site. The MOSC domain occupies 607-762 (LRLLKQSDEE…LYCNSVVEGL (156 aa)).

It belongs to the class-V pyridoxal-phosphate-dependent aminotransferase family. MOCOS subfamily. It depends on pyridoxal 5'-phosphate as a cofactor.

It carries out the reaction Mo-molybdopterin + L-cysteine + AH2 = thio-Mo-molybdopterin + L-alanine + A + H2O. In terms of biological role, sulfurates the molybdenum cofactor. Sulfation of molybdenum is essential for xanthine dehydrogenase (XDH) and aldehyde oxidase (ADO) enzymes in which molybdenum cofactor is liganded by 1 oxygen and 1 sulfur atom in active form. The protein is Molybdenum cofactor sulfurase 1 of Aedes aegypti (Yellowfever mosquito).